Here is a 201-residue protein sequence, read N- to C-terminus: Ribonuclease HII (201 aa).

Residues 12-201 (DLVAGVDEVG…VRELLDVSVQ (190 aa)) enclose the RNase H type-2 domain. A divalent metal cation is bound by residues Asp18, Glu19, and Asp110.

The protein belongs to the RNase HII family. Mn(2+) is required as a cofactor. The cofactor is Mg(2+).

It localises to the cytoplasm. The enzyme catalyses Endonucleolytic cleavage to 5'-phosphomonoester.. In terms of biological role, endonuclease that specifically degrades the RNA of RNA-DNA hybrids. The polypeptide is Ribonuclease HII (Pseudomonas aeruginosa (strain LESB58)).